The following is a 485-amino-acid chain: Glutamyl-tRNA(Gln) amidotransferase subunit A (485 aa).

Active-site charge relay system residues include Lys-80 and Ser-155. The active-site Acyl-ester intermediate is the Ser-179.

The protein belongs to the amidase family. GatA subfamily. Heterotrimer of A, B and C subunits.

It carries out the reaction L-glutamyl-tRNA(Gln) + L-glutamine + ATP + H2O = L-glutaminyl-tRNA(Gln) + L-glutamate + ADP + phosphate + H(+). Its function is as follows. Allows the formation of correctly charged Gln-tRNA(Gln) through the transamidation of misacylated Glu-tRNA(Gln) in organisms which lack glutaminyl-tRNA synthetase. The reaction takes place in the presence of glutamine and ATP through an activated gamma-phospho-Glu-tRNA(Gln). The protein is Glutamyl-tRNA(Gln) amidotransferase subunit A of Endomicrobium trichonymphae.